The sequence spans 200 residues: High mobility group protein B3 (200 aa).

An N6-acetyllysine modification is found at Lys3. DNA-binding regions (HMG box) lie at residues 9-79 (PKGK…KDYG) and 93-161 (PKRP…ADYK). Cys23 is modified (cysteine sulfonic acid (-SO3H); alternate). Residues Cys23 and Cys45 are joined by a disulfide bond. 2 positions are modified to N6-acetyllysine: Lys30 and Lys43. Cys45 carries the cysteine sulfonic acid (-SO3H); alternate modification. A disordered region spans residues 71–97 (YDREMKDYGPAKGGKKKKDPNAPKRPP). Ser98 carries the phosphoserine modification. Cys104 is subject to Cysteine sulfonic acid (-SO3H). Lys112 and Lys139 each carry N6-acetyllysine. Positions 163 to 200 (KGKFDGAKGAAKVARKKVEEEDEEDEEEEEEEEEEEDE) are disordered. Over residues 182-200 (EEDEEDEEEEEEEEEEEDE) the composition is skewed to acidic residues.

This sequence belongs to the HMGB family. Reduction/oxidation of cysteine residues Cys-23, Cys-45 and Cys-104 and a possible intramolecular disulfide bond involving Cys-23 and Cys-45 give rise to different redox forms with specific functional activities in various cellular compartments: 1- fully reduced HMGB3 (HMGB3C23hC45hC104h), 2- disulfide HMGB3 (HMGB3C23-C45C104h) and 3- sulfonyl HMGB3 (HMGB3C23soC45soC104so).

Its subcellular location is the nucleus. It localises to the chromosome. The protein resides in the cytoplasm. Its function is as follows. Multifunctional protein with various roles in different cellular compartments. May act in a redox sensitive manner. Associates with chromatin and binds DNA with a preference for non-canonical DNA structures such as single-stranded DNA. Can bend DNA and enhance DNA flexibility by looping thus providing a mechanism to promote activities on various gene promoters. Proposed to be involved in the innate immune response to nucleic acids by acting as a cytoplasmic promiscuous immunogenic DNA/RNA sensor. Negatively regulates B-cell and myeloid cell differentiation. In hematopoietic stem cells may regulate the balance between self-renewal and differentiation. Involved in negative regulation of canonical Wnt signaling. The sequence is that of High mobility group protein B3 (HMGB3) from Bos taurus (Bovine).